A 430-amino-acid polypeptide reads, in one-letter code: Adenylosuccinate synthetase (430 aa).

Residues 13–19 (GDEGKGK) and 41–43 (GHT) contribute to the GTP site. Residue Asp14 is the Proton acceptor of the active site. 2 residues coordinate Mg(2+): Asp14 and Gly41. IMP contacts are provided by residues 14–17 (DEGK), 39–42 (NAGH), Thr130, Arg144, Gln225, Thr240, and Arg304. Catalysis depends on His42, which acts as the Proton donor. 300-306 (ASTGRPR) contacts substrate. Residues Arg306, 332–334 (KLD), and 414–416 (STG) contribute to the GTP site.

This sequence belongs to the adenylosuccinate synthetase family. Homodimer. Mg(2+) serves as cofactor.

The protein localises to the cytoplasm. It carries out the reaction IMP + L-aspartate + GTP = N(6)-(1,2-dicarboxyethyl)-AMP + GDP + phosphate + 2 H(+). The protein operates within purine metabolism; AMP biosynthesis via de novo pathway; AMP from IMP: step 1/2. Its function is as follows. Plays an important role in the de novo pathway of purine nucleotide biosynthesis. Catalyzes the first committed step in the biosynthesis of AMP from IMP. This chain is Adenylosuccinate synthetase, found in Stenotrophomonas maltophilia (strain R551-3).